The primary structure comprises 569 residues: Urease subunit alpha (569 aa).

In terms of domain architecture, Urease spans 131 to 569 (GGVDAHIHFI…VAMAQRYFLF (439 aa)). H136, H138, and K219 together coordinate Ni(2+). N6-carboxylysine is present on K219. Residue H221 coordinates substrate. Residues H248 and H274 each contribute to the Ni(2+) site. Catalysis depends on H322, which acts as the Proton donor. Residue D362 coordinates Ni(2+).

This sequence belongs to the metallo-dependent hydrolases superfamily. Urease alpha subunit family. In terms of assembly, heterotrimer of UreA (gamma), UreB (beta) and UreC (alpha) subunits. Three heterotrimers associate to form the active enzyme. It depends on Ni cation as a cofactor. Post-translationally, carboxylation allows a single lysine to coordinate two nickel ions.

The protein localises to the cytoplasm. The catalysed reaction is urea + 2 H2O + H(+) = hydrogencarbonate + 2 NH4(+). It functions in the pathway nitrogen metabolism; urea degradation; CO(2) and NH(3) from urea (urease route): step 1/1. The protein is Urease subunit alpha of Geobacillus kaustophilus (strain HTA426).